The primary structure comprises 135 residues: MMVMTALTLLILFFGLAFILVGFGLILGYLIFSRKNKTVNGTANRTVVVERDSSNLLGTAAAVAGGVIAGELITDAIEDVINNNENNEADGYNSEGIETTIEDTIEEIDKGVDNVIEDITDEIDNITNDIGDSFF.

Transmembrane regions (helical) follow at residues 11-31 and 57-77; these read ILFF…GYLI and LGTA…TDAI.

It localises to the cell membrane. This is an uncharacterized protein from Methanocaldococcus jannaschii (strain ATCC 43067 / DSM 2661 / JAL-1 / JCM 10045 / NBRC 100440) (Methanococcus jannaschii).